The primary structure comprises 366 residues: Galactoside alpha-(1,2)-fucosyltransferase 1 (366 aa).

At 1-8 (MWPLSHRH) the chain is on the cytoplasmic side. Residues 9–25 (LCLAFLLVCVLSAISFF) traverse the membrane as a helical; Signal-anchor for type II membrane protein segment. Residues 26–366 (LHIHQDSIRH…LSPLWTLAEP (341 aa)) lie on the Lumenal side of the membrane. 3 N-linked (GlcNAc...) asparagine glycosylation sites follow: Asn-66, Asn-302, and Asn-328.

This sequence belongs to the glycosyltransferase 11 family.

It is found in the golgi apparatus. The protein resides in the golgi stack membrane. The catalysed reaction is a beta-D-galactosyl-(1-&gt;4)-N-acetyl-beta-D-glucosaminyl derivative + GDP-beta-L-fucose = an alpha-L-Fuc-(1-&gt;2)-beta-D-Gal-(1-&gt;4)-beta-D-GlcNAc derivative + GDP + H(+). It catalyses the reaction a ganglioside GA1 + GDP-beta-L-fucose = a ganglioside Fuc-GA1 + GDP + H(+). The enzyme catalyses a beta-D-Gal-(1-&gt;3)-beta-D-GlcNAc-(1-&gt;3)-beta-D-Gal-(1-&gt;4)-beta-D-Glc-(1&lt;-&gt;1')-Cer(d18:1(4E)) + GDP-beta-L-fucose = alpha-L-fucosyl-(1-&gt;2)- beta-D-galactosyl-(1-&gt;3)-N-acetyl-beta-D-glucosaminyl-(1-&gt;3)-beta-D-galactosyl-(1-&gt;4)-beta-D-glucosyl-(1&lt;-&gt;1')-N-acylsphing-4-enine + GDP + H(+). It carries out the reaction a neolactoside nLc4Cer(d18:1(4E)) + GDP-beta-L-fucose = a neolactoside IV(2)-alpha-Fuc-nLc4Cer(d18:1(4E)) + GDP + H(+). The catalysed reaction is a ganglioside GM1 + GDP-beta-L-fucose = a ganglioside Fuc-GM1 + GDP + H(+). It catalyses the reaction beta-D-galactosyl-(1-&gt;3)-N-acetyl-D-galactosamine + GDP-beta-L-fucose = alpha-L-fucosyl-(1-&gt;2)-beta-D-galactosyl-(1-&gt;3)-N-acetyl-D-galactosamine + GDP + H(+). The protein operates within protein modification; protein glycosylation. Its function is as follows. Catalyzes the transfer of L-fucose, from a guanosine diphosphate-beta-L-fucose, to the terminal galactose residue of glycoconjugates through an alpha(1,2) linkage leading to H antigen synthesis that is an intermediate substrate in the synthesis of ABO blood group antigens. H antigen is essential for maturation of the glomerular layer of the main olfactory bulb, in cell migration and early cell-cell contacts during tumor associated angiogenesis. Preferentially fucosylates soluble lactose and to a lesser extent fucosylates glycolipids gangliosides GA1 and GM1a. The sequence is that of Galactoside alpha-(1,2)-fucosyltransferase 1 from Aotus azarae (Azara's night monkey).